A 598-amino-acid polypeptide reads, in one-letter code: Elongation factor 4 (598 aa).

One can recognise a tr-type G domain in the interval 2–184; that stretch reads QHIRNFSIIA…TVVRRVPPPK (183 aa). GTP is bound by residues 14-19 and 131-134; these read DHGKST and NKID.

Belongs to the TRAFAC class translation factor GTPase superfamily. Classic translation factor GTPase family. LepA subfamily.

It is found in the cell inner membrane. It catalyses the reaction GTP + H2O = GDP + phosphate + H(+). Functionally, required for accurate and efficient protein synthesis under certain stress conditions. May act as a fidelity factor of the translation reaction, by catalyzing a one-codon backward translocation of tRNAs on improperly translocated ribosomes. Back-translocation proceeds from a post-translocation (POST) complex to a pre-translocation (PRE) complex, thus giving elongation factor G a second chance to translocate the tRNAs correctly. Binds to ribosomes in a GTP-dependent manner. The chain is Elongation factor 4 from Aromatoleum aromaticum (strain DSM 19018 / LMG 30748 / EbN1) (Azoarcus sp. (strain EbN1)).